We begin with the raw amino-acid sequence, 287 residues long: tRNA selenocysteine 1-associated protein 1 (287 aa).

RRM domains follow at residues 3–86 and 96–175; these read ASLW…YATY and YSLF…VAIP.

It belongs to the RRM TRSPAP family. As to quaternary structure, component of the tRNA(Sec) complex composed at least of EEFSEC, SECISBP2, SEPHS1, SEPSECS, TRNAU1AP and tRNA(Sec). Found in a complex with tRNA(Sec). Interacts with SEPSECS. Associates with mRNP and/or polysomes. Found in a complex with EEFSEC, SECISBP2, TRNAU1AP and tRNA(Sec).

It localises to the nucleus. Its subcellular location is the cytoplasm. In terms of biological role, involved in the early steps of selenocysteine biosynthesis and tRNA(Sec) charging to the later steps resulting in the cotranslational incorporation of selenocysteine into selenoproteins. Stabilizes the SECISBP2, EEFSEC and tRNA(Sec) complex. May be involved in the methylation of tRNA(Sec). Enhances efficiency of selenoproteins synthesis. This chain is tRNA selenocysteine 1-associated protein 1 (TRNAU1AP), found in Homo sapiens (Human).